The following is a 173-amino-acid chain: Signal peptidase complex catalytic subunit sec11 (173 aa).

The Cytoplasmic segment spans residues 1–15; it reads MLGIADMQPRQLAAQ. A helical; Signal-anchor for type II membrane protein membrane pass occupies residues 16-36; sequence ILNFALVLSTAFMMWKGLSVV. The Lumenal segment spans residues 37–173; it reads SDSPSPIVVV…MGVMVVLQRE (137 aa). Catalysis depends on charge relay system residues Ser50, His89, and Asp115. The segment at 159–170 is C-terminal short (CTS) helix; sequence VMLGLMGVMVVL.

The protein belongs to the peptidase S26B family. Component of the signal peptidase complex (SPC) composed of a catalytic subunit SEC11 and three accessory subunits SPC1, SPC2 and SPC3. The complex induces a local thinning of the ER membrane which is used to measure the length of the signal peptide (SP) h-region of protein substrates. This ensures the selectivity of the complex towards h-regions shorter than 18-20 amino acids. SPC associates with the translocon complex.

The protein localises to the endoplasmic reticulum membrane. The enzyme catalyses Cleavage of hydrophobic, N-terminal signal or leader sequences from secreted and periplasmic proteins.. In terms of biological role, catalytic component of the signal peptidase complex (SPC) which catalyzes the cleavage of N-terminal signal sequences from nascent proteins as they are translocated into the lumen of the endoplasmic reticulum. Specifically cleaves N-terminal signal peptides that contain a hydrophobic alpha-helix (h-region) shorter than 18-20 amino acids. The polypeptide is Signal peptidase complex catalytic subunit sec11 (sec11) (Pyrenophora tritici-repentis (strain Pt-1C-BFP) (Wheat tan spot fungus)).